The chain runs to 135 residues: Small ribosomal subunit protein uS9 (135 aa).

The protein belongs to the universal ribosomal protein uS9 family.

This chain is Small ribosomal subunit protein uS9 (rps9), found in Archaeoglobus fulgidus (strain ATCC 49558 / DSM 4304 / JCM 9628 / NBRC 100126 / VC-16).